The sequence spans 133 residues: Holo-[acyl-carrier-protein] synthase (133 aa).

Residues aspartate 8 and glutamate 64 each coordinate Mg(2+).

Belongs to the P-Pant transferase superfamily. AcpS family. Requires Mg(2+) as cofactor.

It is found in the cytoplasm. It catalyses the reaction apo-[ACP] + CoA = holo-[ACP] + adenosine 3',5'-bisphosphate + H(+). Its function is as follows. Transfers the 4'-phosphopantetheine moiety from coenzyme A to a Ser of acyl-carrier-protein. This chain is Holo-[acyl-carrier-protein] synthase, found in Shewanella loihica (strain ATCC BAA-1088 / PV-4).